Reading from the N-terminus, the 917-residue chain is Major intrinsically disordered Notch2-binding receptor 1 (917 aa).

The Cytoplasmic segment spans residues 1–892; the sequence is MEANQEASLF…AEFRRAKVCK (892 aa). Disordered regions lie at residues 337–367, 388–410, 461–483, 568–588, 652–687, 706–727, and 746–783; these read STYF…WPAK, PSEE…GPDR, SCTS…QHVL, ITNG…NVHH, SEAP…CSDA, TRPS…IASI, and NEEE…LPKQ. Residues 461 to 480 are compositionally biased toward polar residues; the sequence is SCTSGQHSSDTSSVGTQTEQ. Residues 576–588 are compositionally biased toward basic and acidic residues; the sequence is KGDKCNRPENVHH. The residue at position 712 (Ser-712) is a Phosphoserine. Residues 893–913 traverse the membrane as a helical segment; that stretch reads IAALITAAACTVILVIVVPIC. Residues 914–917 are Extracellular-facing; the sequence is TMKS.

It belongs to the MINAR family. Interacts with NOTCH2; this interaction increases MINAR1 stability. Interacts (via N-terminus) with DEPTOR (via PDZ domain); this interaction may stabilize DEPTOR protein by impairing its ubiquitination. As to expression, expressed in brain and in islets of Langerhans.

It is found in the cell membrane. Its function is as follows. Intrinsically disordered protein which may negatively regulate mTOR signaling pathway by stabilizing the mTOR complex component DEPTOR. Negatively regulates angiogenesis. Negatively regulates cell growth. Negatively regulates neurite outgrowth in hippocampal neurons. This Mus musculus (Mouse) protein is Major intrinsically disordered Notch2-binding receptor 1 (Minar1).